The following is a 524-amino-acid chain: Serine/threonine-protein kinase PAK 2 (524 aa).

The interval 1 to 81 (MSDNGELEDK…PEISPPSDFE (81 aa)) is disordered. S2 is subject to N-acetylserine. A phosphoserine mark is found at S2, S20, S55, and S58. T60 bears the Phosphothreonine mark. K62 bears the N6-acetyllysine mark. The residue at position 64 (S64) is a Phosphoserine. Residues 67 to 81 (KEKERPEISPPSDFE) are compositionally biased toward basic and acidic residues. The GTPase-binding stretch occupies residues 69 to 112 (KERPEISPPSDFEHTIHVGFDAVTGEFTGMPEQWARLLQTSNIT). The autoregulatory region stretch occupies residues 69-137 (KERPEISPPS…KFYDSNTVKQ (69 aa)). A CRIB domain is found at 74–87 (ISPPSDFEHTIHVG). A linker region spans residues 88–248 (FDAVTGEFTG…IVSIGDPKKK (161 aa)). At K128 the chain carries N6-acetyllysine. Position 134 is a phosphothreonine (T134). At Y139 the chain carries Phosphotyrosine. Position 141 is a phosphoserine (S141). At T143 the chain carries Phosphothreonine. Position 152 is a phosphoserine (S152). Residues T159 and T169 each carry the phosphothreonine modification. A compositionally biased stretch (acidic residues) spans 169 to 178 (TEEDDDDEEA). Residues 169–188 (TEEDDDDEEAAPPVIAPRPD) are disordered. Phosphoserine is present on S197. The tract at residues 204 to 228 (APVGDSHVDSGAKSSDKQKKKTKMT) is disordered. A compositionally biased stretch (basic and acidic residues) spans 209-228 (SHVDSGAKSSDKQKKKTKMT). A Nuclear localization signal motif is present at residues 245–251 (PKKKYTR). The Protein kinase domain occupies 249–500 (YTRYEKIGQG…AKELLQHPFL (252 aa)). Residues 255–263 (IGQGASGTV) and K278 contribute to the ATP site. D368 serves as the catalytic Proton acceptor. Position 402 is a phosphothreonine; by autocatalysis (T402).

As to quaternary structure, interacts tightly with GTP-bound but not GDP-bound CDC42/p21 and RAC1. Interacts with SH3MD4. Interacts with SCRIB. Interacts with ARHGEF7 and GIT1. PAK-2p34 interacts with ARHGAP10. Interacts with RAC1. Full-length PAK2 is autophosphorylated when activated by CDC42/p21. Following cleavage, both peptides, PAK-2p27 and PAK-2p34, become highly autophosphorylated. Autophosphorylation of PAK-2p27 can occur in the absence of any effectors and is dependent on phosphorylation of Thr-402, because PAK-2p27 is acting as an exogenous substrate. In terms of processing, during apoptosis proteolytically cleaved by caspase-3 or caspase-3-like proteases to yield active PAK-2p34. Post-translationally, ubiquitinated, leading to its proteasomal degradation.

The protein resides in the cytoplasm. It is found in the nucleus. The protein localises to the perinuclear region. It localises to the membrane. The catalysed reaction is L-seryl-[protein] + ATP = O-phospho-L-seryl-[protein] + ADP + H(+). It catalyses the reaction L-threonyl-[protein] + ATP = O-phospho-L-threonyl-[protein] + ADP + H(+). Activated by binding small G proteins. Binding of GTP-bound CDC42 or RAC1 to the autoregulatory region releases monomers from the autoinhibited dimer, enables phosphorylation of Thr-402 and allows the kinase domain to adopt an active structure. Following caspase cleavage, autophosphorylated PAK-2p34 is constitutively active. Functionally, serine/threonine protein kinase that plays a role in a variety of different signaling pathways including cytoskeleton regulation, cell motility, cell cycle progression, apoptosis or proliferation. Acts as a downstream effector of the small GTPases CDC42 and RAC1. Activation by the binding of active CDC42 and RAC1 results in a conformational change and a subsequent autophosphorylation on several serine and/or threonine residues. Full-length PAK2 stimulates cell survival and cell growth. Phosphorylates MAPK4 and MAPK6 and activates the downstream target MAPKAPK5, a regulator of F-actin polymerization and cell migration. Phosphorylates JUN and plays an important role in EGF-induced cell proliferation. Phosphorylates many other substrates including histone H4 to promote assembly of H3.3 and H4 into nucleosomes, BAD, ribosomal protein S6, or MBP. Phosphorylates CASP7, thereby preventing its activity. Additionally, associates with ARHGEF7 and GIT1 to perform kinase-independent functions such as spindle orientation control during mitosis. On the other hand, apoptotic stimuli such as DNA damage lead to caspase-mediated cleavage of PAK2, generating PAK-2p34, an active p34 fragment that translocates to the nucleus and promotes cellular apoptosis involving the JNK signaling pathway. Caspase-activated PAK2 phosphorylates MKNK1 and reduces cellular translation. This chain is Serine/threonine-protein kinase PAK 2 (PAK2), found in Oryctolagus cuniculus (Rabbit).